A 141-amino-acid chain; its full sequence is MKSKKQILRLRKRAEFLTVRNGEKRRGPLFLMEVRERTEEESNAAKTGDNPRVGFTVTKKNGNAVIRNRIRRRLKEAIRCHAGRDMAPSTDYVIVAREQALNAPFSQLTEELSRRITAKGERRSGGKRRTERPEPGPVNGK.

Disordered stretches follow at residues 37–56 (RTEE…VGFT) and 114–141 (RRIT…VNGK). The segment covering 114–124 (RRITAKGERRS) has biased composition (basic and acidic residues).

Belongs to the RnpA family. Consists of a catalytic RNA component (M1 or rnpB) and a protein subunit.

It carries out the reaction Endonucleolytic cleavage of RNA, removing 5'-extranucleotides from tRNA precursor.. In terms of biological role, RNaseP catalyzes the removal of the 5'-leader sequence from pre-tRNA to produce the mature 5'-terminus. It can also cleave other RNA substrates such as 4.5S RNA. The protein component plays an auxiliary but essential role in vivo by binding to the 5'-leader sequence and broadening the substrate specificity of the ribozyme. The sequence is that of Ribonuclease P protein component from Brucella melitensis biotype 2 (strain ATCC 23457).